Consider the following 652-residue polypeptide: MNAAIPNQAAKFLAATAHVDEAAVQPLPNSRKIYVEGSTPDIRVPMREIRQADTPLMFSGEAGTGAERSEPNPPIFVYDCSGPYTDPAAKIDIREGLPALRTKWIEARGDTEVLRDLSSEYGRQQAANPELATMRFPGLHRHPRRAKAGMNVTQMHYARQGIITPEMEFIAIRENNNRAAYLESLRASGPQGAKLAALMSRQHPGQNFGANLQGEITPEFVRDEVARGRAIIPNNINHPESEPMIIGRNFLVKINANIGNSALGSSIQEEVEKMTWAIRWGGDTVMDLSTGKNIHETREWIIRNSPVPIGTVPIYQALEKVDGKAEELTWEMFRDTLVEQAEQGVDYFTIHAGVLLRYVPMTANRMTGIVSRGGSIMAKWCLAHHKESFLYTHFEEICEIMKAYDVAFSLGDGLRPGSIYDANDEAQLSELRTLGELTQVAWKHDVQVMIEGPGHVPMQLIKENMDIQLESCSEAPFYTLGPLTTDIAPGYDHITSGIGAAMIGWYGTAMLCYVTPKEHLGLPDKDDVKEGIITYKLAAHAADLAKGHPGAQIRDNALSKARFEFRWDDQFNLGLDPDKAKSFHDETLPKESAKVAHFCSMCGPHFCSMKITQDVREFAAKEGLNEADALARGMEVKAVEFVKQGAEVYRKV.

Substrate-binding positions include Asn-257, Met-286, Tyr-315, His-351, 371–373 (SRG), 412–415 (DGLR), and Glu-451. His-455 contacts Zn(2+). A substrate-binding site is contributed by Tyr-478. Position 519 (His-519) interacts with Zn(2+). [4Fe-4S] cluster contacts are provided by Cys-599, Cys-602, and Cys-607.

Belongs to the ThiC family. Homodimer. Requires [4Fe-4S] cluster as cofactor.

The catalysed reaction is 5-amino-1-(5-phospho-beta-D-ribosyl)imidazole + S-adenosyl-L-methionine = 4-amino-2-methyl-5-(phosphooxymethyl)pyrimidine + CO + 5'-deoxyadenosine + formate + L-methionine + 3 H(+). It functions in the pathway cofactor biosynthesis; thiamine diphosphate biosynthesis. Its function is as follows. Catalyzes the synthesis of the hydroxymethylpyrimidine phosphate (HMP-P) moiety of thiamine from aminoimidazole ribotide (AIR) in a radical S-adenosyl-L-methionine (SAM)-dependent reaction. This Thiobacillus denitrificans (strain ATCC 25259 / T1) protein is Phosphomethylpyrimidine synthase.